Consider the following 152-residue polypeptide: SsrA-binding protein (152 aa).

Basic and acidic residues predominate over residues 132-142 (REAIKKRDVSD). The disordered stretch occupies residues 132 to 152 (REAIKKRDVSDQIRSSLRRSR).

It belongs to the SmpB family.

The protein resides in the cytoplasm. In terms of biological role, required for rescue of stalled ribosomes mediated by trans-translation. Binds to transfer-messenger RNA (tmRNA), required for stable association of tmRNA with ribosomes. tmRNA and SmpB together mimic tRNA shape, replacing the anticodon stem-loop with SmpB. tmRNA is encoded by the ssrA gene; the 2 termini fold to resemble tRNA(Ala) and it encodes a 'tag peptide', a short internal open reading frame. During trans-translation Ala-aminoacylated tmRNA acts like a tRNA, entering the A-site of stalled ribosomes, displacing the stalled mRNA. The ribosome then switches to translate the ORF on the tmRNA; the nascent peptide is terminated with the 'tag peptide' encoded by the tmRNA and targeted for degradation. The ribosome is freed to recommence translation, which seems to be the essential function of trans-translation. The polypeptide is SsrA-binding protein (Bdellovibrio bacteriovorus (strain ATCC 15356 / DSM 50701 / NCIMB 9529 / HD100)).